Consider the following 309-residue polypeptide: Ketosamine-3-kinase (309 aa).

Serine 20 bears the Phosphoserine mark. An ATP-binding site is contributed by 89–91 (EHL). Aspartate 217 functions as the Proton acceptor in the catalytic mechanism.

It belongs to the fructosamine kinase family.

The enzyme catalyses N(6)-D-ribulosyl-L-lysyl-[protein] + ATP = N(6)-(3-O-phospho-D-ribulosyl)-L-lysyl-[protein] + ADP + H(+). It carries out the reaction N(6)-(D-psicosyl)-L-lysyl-[protein] + ATP = N(6)-(3-O-phospho-D-psicosyl)-L-lysyl-[protein] + ADP + H(+). Its function is as follows. Ketosamine-3-kinase involved in protein deglycation by mediating phosphorylation of ribuloselysine and psicoselysine on glycated proteins, to generate ribuloselysine-3 phosphate and psicoselysine-3 phosphate, respectively. Ribuloselysine-3 phosphate and psicoselysine-3 phosphate adducts are unstable and decompose under physiological conditions. Not able to phosphorylate fructoselysine. The sequence is that of Ketosamine-3-kinase from Mus musculus (Mouse).